Reading from the N-terminus, the 220-residue chain is Demethylmenaquinone methyltransferase (220 aa).

Residues Thr-47, Asp-67, and 93–94 (DA) contribute to the S-adenosyl-L-methionine site.

The protein belongs to the class I-like SAM-binding methyltransferase superfamily. MenG/UbiE family.

It carries out the reaction a 2-demethylmenaquinol + S-adenosyl-L-methionine = a menaquinol + S-adenosyl-L-homocysteine + H(+). Its pathway is quinol/quinone metabolism; menaquinone biosynthesis; menaquinol from 1,4-dihydroxy-2-naphthoate: step 2/2. Functionally, methyltransferase required for the conversion of demethylmenaquinol (DMKH2) to menaquinol (MKH2). This chain is Demethylmenaquinone methyltransferase, found in Thermus thermophilus (strain ATCC BAA-163 / DSM 7039 / HB27).